A 490-amino-acid polypeptide reads, in one-letter code: Protein nucleotidyltransferase YdiU (490 aa).

Gly-89, Gly-91, Arg-92, Lys-112, Asp-124, Gly-125, Arg-175, and Arg-182 together coordinate ATP. The active-site Proton acceptor is the Asp-251. Residues Asn-252 and Asp-261 each contribute to the Mg(2+) site. An ATP-binding site is contributed by Asp-261.

It belongs to the SELO family. Requires Mg(2+) as cofactor. Mn(2+) is required as a cofactor.

The enzyme catalyses L-seryl-[protein] + ATP = 3-O-(5'-adenylyl)-L-seryl-[protein] + diphosphate. It catalyses the reaction L-threonyl-[protein] + ATP = 3-O-(5'-adenylyl)-L-threonyl-[protein] + diphosphate. The catalysed reaction is L-tyrosyl-[protein] + ATP = O-(5'-adenylyl)-L-tyrosyl-[protein] + diphosphate. It carries out the reaction L-histidyl-[protein] + UTP = N(tele)-(5'-uridylyl)-L-histidyl-[protein] + diphosphate. The enzyme catalyses L-seryl-[protein] + UTP = O-(5'-uridylyl)-L-seryl-[protein] + diphosphate. It catalyses the reaction L-tyrosyl-[protein] + UTP = O-(5'-uridylyl)-L-tyrosyl-[protein] + diphosphate. In terms of biological role, nucleotidyltransferase involved in the post-translational modification of proteins. It can catalyze the addition of adenosine monophosphate (AMP) or uridine monophosphate (UMP) to a protein, resulting in modifications known as AMPylation and UMPylation. This is Protein nucleotidyltransferase YdiU from Vibrio vulnificus (strain CMCP6).